The following is a 327-amino-acid chain: GTP 3',8-cyclase (327 aa).

The 213-residue stretch at 21-233 (SYGRRIRKLR…AKIQQKYSLK (213 aa)) folds into the Radical SAM core domain. GTP is bound at residue arginine 30. [4Fe-4S] cluster is bound by residues cysteine 37 and cysteine 41. S-adenosyl-L-methionine is bound at residue tyrosine 43. Position 44 (cysteine 44) interacts with [4Fe-4S] cluster. Arginine 79 contributes to the GTP binding site. Glycine 83 contributes to the S-adenosyl-L-methionine binding site. Threonine 109 contacts GTP. Serine 133 provides a ligand contact to S-adenosyl-L-methionine. Residue lysine 169 coordinates GTP. Methionine 203 provides a ligand contact to S-adenosyl-L-methionine. The [4Fe-4S] cluster site is built by cysteine 265 and cysteine 268. A GTP-binding site is contributed by 270-272 (RWR). Residue cysteine 282 coordinates [4Fe-4S] cluster.

Belongs to the radical SAM superfamily. MoaA family. In terms of assembly, monomer and homodimer. [4Fe-4S] cluster serves as cofactor.

It catalyses the reaction GTP + AH2 + S-adenosyl-L-methionine = (8S)-3',8-cyclo-7,8-dihydroguanosine 5'-triphosphate + 5'-deoxyadenosine + L-methionine + A + H(+). It functions in the pathway cofactor biosynthesis; molybdopterin biosynthesis. Its function is as follows. Catalyzes the cyclization of GTP to (8S)-3',8-cyclo-7,8-dihydroguanosine 5'-triphosphate. In Synechocystis sp. (strain ATCC 27184 / PCC 6803 / Kazusa), this protein is GTP 3',8-cyclase.